A 159-amino-acid polypeptide reads, in one-letter code: Transcription elongation factor GreA (159 aa).

Residues 14–76 (VKKLEEELEY…QLENMLRNAN (63 aa)) adopt a coiled-coil conformation.

Belongs to the GreA/GreB family.

In terms of biological role, necessary for efficient RNA polymerase transcription elongation past template-encoded arresting sites. The arresting sites in DNA have the property of trapping a certain fraction of elongating RNA polymerases that pass through, resulting in locked ternary complexes. Cleavage of the nascent transcript by cleavage factors such as GreA or GreB allows the resumption of elongation from the new 3'terminus. GreA releases sequences of 2 to 3 nucleotides. The protein is Transcription elongation factor GreA of Clostridium novyi (strain NT).